The sequence spans 216 residues: MKVSVPGMPVTLLNMSKNDIYKMVSGDKMDVKMNIFQRLWETLRHLFWSDKQTEAYKLLFNFVNNQTGNINASEYFTGAINENEREKFINSLELFNKLKTCAKNPDELVAKGNMRWVAQTFGDIELSVTFFIEKNKICTQTLQLHKGQGNLGVDLRKAYLPGVDMRDCYLGKKTMKGSNDILYERPGWNANLGVLPRTVLPRTVLTRTVLTWTVLP.

This is Protein YabP (yabP) from Escherichia coli (strain K12).